A 145-amino-acid chain; its full sequence is 3-hydroxyacyl-[acyl-carrier-protein] dehydratase FabZ (145 aa).

The active site involves histidine 47.

Belongs to the thioester dehydratase family. FabZ subfamily.

The protein localises to the cytoplasm. It catalyses the reaction a (3R)-hydroxyacyl-[ACP] = a (2E)-enoyl-[ACP] + H2O. Involved in unsaturated fatty acids biosynthesis. Catalyzes the dehydration of short chain beta-hydroxyacyl-ACPs and long chain saturated and unsaturated beta-hydroxyacyl-ACPs. In Methylobacillus flagellatus (strain ATCC 51484 / DSM 6875 / VKM B-1610 / KT), this protein is 3-hydroxyacyl-[acyl-carrier-protein] dehydratase FabZ.